The primary structure comprises 205 residues: Holliday junction branch migration complex subunit RuvA (205 aa).

A domain I region spans residues 1–64 (MIGRLRGTLA…EDAHLLYGFA (64 aa)). Residues 65-143 (EKRERELFRE…AWETSPAMFT (79 aa)) form a domain II region. The segment at 144–154 (LVSDGPLPVAS) is flexible linker. The segment at 154 to 205 (SESSAEADAVSALVSLGYKPQEASKAIAAIKDKAGLSSEELIRRSLKGMIAK) is domain III.

This sequence belongs to the RuvA family. Homotetramer. Forms an RuvA(8)-RuvB(12)-Holliday junction (HJ) complex. HJ DNA is sandwiched between 2 RuvA tetramers; dsDNA enters through RuvA and exits via RuvB. An RuvB hexamer assembles on each DNA strand where it exits the tetramer. Each RuvB hexamer is contacted by two RuvA subunits (via domain III) on 2 adjacent RuvB subunits; this complex drives branch migration. In the full resolvosome a probable DNA-RuvA(4)-RuvB(12)-RuvC(2) complex forms which resolves the HJ.

The protein localises to the cytoplasm. The RuvA-RuvB-RuvC complex processes Holliday junction (HJ) DNA during genetic recombination and DNA repair, while the RuvA-RuvB complex plays an important role in the rescue of blocked DNA replication forks via replication fork reversal (RFR). RuvA specifically binds to HJ cruciform DNA, conferring on it an open structure. The RuvB hexamer acts as an ATP-dependent pump, pulling dsDNA into and through the RuvAB complex. HJ branch migration allows RuvC to scan DNA until it finds its consensus sequence, where it cleaves and resolves the cruciform DNA. This Pseudomonas entomophila (strain L48) protein is Holliday junction branch migration complex subunit RuvA.